Consider the following 554-residue polypeptide: Hydroxylamine reductase (554 aa).

[2Fe-2S] cluster-binding residues include cysteine 3, cysteine 6, cysteine 18, and cysteine 25. Hybrid [4Fe-2O-2S] cluster contacts are provided by histidine 252, glutamate 276, cysteine 320, cysteine 408, cysteine 436, cysteine 461, glutamate 495, and lysine 497. Cysteine persulfide is present on cysteine 408.

The protein belongs to the HCP family. It depends on [2Fe-2S] cluster as a cofactor. Hybrid [4Fe-2O-2S] cluster serves as cofactor.

The protein localises to the cytoplasm. It carries out the reaction A + NH4(+) + H2O = hydroxylamine + AH2 + H(+). Functionally, catalyzes the reduction of hydroxylamine to form NH(3) and H(2)O. The sequence is that of Hydroxylamine reductase from Shewanella loihica (strain ATCC BAA-1088 / PV-4).